The sequence spans 58 residues: T-cell receptor gamma alternate reading frame protein (58 aa).

Detected at low levels in the ductal cells of the salivary gland but not in the acinar cells (at protein level). Expressed in endometrium (at protein level). Expressed in epithelial cells within the acinar ducts of the prostate.

This Homo sapiens (Human) protein is T-cell receptor gamma alternate reading frame protein.